Reading from the N-terminus, the 396-residue chain is MKTLVFNPFSGAAGDMILACALDLGADKQAVKELVEASAPVSMDIREVVKEGIKALDVRIKVPENEHVRTYPEIVDLVKAAKLPLQLEASTLSIFLKMAEAEAAVHGQPDLEMLHFHEVGQSDALADVIGSSAALHSLNCDSVYCTPINVGSGTIECAHGTLPVPAPATLEILRKGKLYFRGGSVNKELLTPTGAAILSHFAKPVETFPQGKAIAIGYGAGNADLPGPNVLQGVLLEPDSHLISDIIEVLETNADDVSGEVLGNLFEELLSMGARDVAIMPATMKKGRPAHIIKVIAKPEDSAKLARKIIVETGSLGVRVMPARHRLMAARNIERIKIELEGQEFETAVKVARDSEGVLLNISAEFEDCKKIAKASGIPVREIMRRTEEVARKLFS.

The protein belongs to the LarC family.

This is Putative nickel insertion protein from Methanosarcina acetivorans (strain ATCC 35395 / DSM 2834 / JCM 12185 / C2A).